A 235-amino-acid chain; its full sequence is Phosphoribosylaminoimidazole-succinocarboxamide synthase (235 aa).

It belongs to the SAICAR synthetase family.

The enzyme catalyses 5-amino-1-(5-phospho-D-ribosyl)imidazole-4-carboxylate + L-aspartate + ATP = (2S)-2-[5-amino-1-(5-phospho-beta-D-ribosyl)imidazole-4-carboxamido]succinate + ADP + phosphate + 2 H(+). The protein operates within purine metabolism; IMP biosynthesis via de novo pathway; 5-amino-1-(5-phospho-D-ribosyl)imidazole-4-carboxamide from 5-amino-1-(5-phospho-D-ribosyl)imidazole-4-carboxylate: step 1/2. In Chlorobium chlorochromatii (strain CaD3), this protein is Phosphoribosylaminoimidazole-succinocarboxamide synthase.